We begin with the raw amino-acid sequence, 253 residues long: 5'-nucleotidase SurE (253 aa).

D8, D9, S39, and N92 together coordinate a divalent metal cation.

This sequence belongs to the SurE nucleotidase family. A divalent metal cation serves as cofactor.

The protein localises to the cytoplasm. It carries out the reaction a ribonucleoside 5'-phosphate + H2O = a ribonucleoside + phosphate. Its function is as follows. Nucleotidase that shows phosphatase activity on nucleoside 5'-monophosphates. This is 5'-nucleotidase SurE from Burkholderia pseudomallei (strain 1710b).